A 243-amino-acid polypeptide reads, in one-letter code: Probable enoyl-CoA hydratase echA6 (243 aa).

It belongs to the enoyl-CoA hydratase/isomerase family.

The catalysed reaction is a (3S)-3-hydroxyacyl-CoA = a (2E)-enoyl-CoA + H2O. The enzyme catalyses a 4-saturated-(3S)-3-hydroxyacyl-CoA = a (3E)-enoyl-CoA + H2O. In terms of biological role, could possibly oxidize fatty acids using specific components. The sequence is that of Probable enoyl-CoA hydratase echA6 (echA6) from Mycobacterium bovis (strain ATCC BAA-935 / AF2122/97).